A 341-amino-acid polypeptide reads, in one-letter code: Major histocompatibility complex class I-related protein 1 (341 aa).

The first 18 residues, 1–18, serve as a signal peptide directing secretion; that stretch reads MMLLLPLLAVFLVKRSHT. The tract at residues 19–105 is alpha-1; the sequence is RTHSLRYFRL…RHLQRHYNHS (87 aa). The segment at 19-197 is antigen-binding cleft; it reads RTHSLRYFRL…EYGRDTLERT (179 aa). Topologically, residues 19 to 296 are extracellular; the sequence is RTHSLRYFRL…APRESGDILR (278 aa). Residues Tyr25 and Arg27 each coordinate 8-(9H-purin-6-yl)-2-oxa-8-azabicyclo[3.3.1]nona-3,6-diene-4,6-dicarbaldehyde. Residues Arg27, Ser42, and Lys61 each coordinate 5-(2-oxoethylideneamino)-6-(D-ribitylamino)uracil. Arg27, Ser42, and Lys61 together coordinate 5-(2-oxopropylideneamino)-6-(D-ribitylamino)uracil. Residues Arg27, Ser42, and Lys61 each coordinate 7-hydroxy-6-methyl-8-(1-D-ribityl)lumazine. 8-(9H-purin-6-yl)-2-oxa-8-azabicyclo[3.3.1]nona-3,6-diene-4,6-dicarbaldehyde contacts are provided by Lys61 and His76. Lys61 is a binding site for 2-amino-4-oxopteridine-6-carbaldehyde. Position 61 (Lys61) interacts with pyridoxal. Asn103 carries an N-linked (GlcNAc...) asparagine glycan. The tract at residues 106 to 197 is alpha-2; that stretch reads GLHTYQRMIG…EYGRDTLERT (92 aa). Arg112 lines the 8-(9H-purin-6-yl)-2-oxa-8-azabicyclo[3.3.1]nona-3,6-diene-4,6-dicarbaldehyde pocket. 5-(2-oxoethylideneamino)-6-(D-ribitylamino)uracil-binding residues include Arg112, Tyr170, and Gln171. The 5-(2-oxopropylideneamino)-6-(D-ribitylamino)uracil site is built by Arg112, Tyr170, and Gln171. 7-hydroxy-6-methyl-8-(1-D-ribityl)lumazine-binding residues include Arg112, Tyr170, and Gln171. 2 disulfides stabilise this stretch: Cys116/Cys179 and Cys218/Cys274. The tract at residues 198–289 is alpha-3; it reads EHPVVRTTRK…GRQMVLEAPR (92 aa). One can recognise an Ig-like C1-type domain in the interval 200-301; that stretch reads PVVRTTRKET…GDILRVSTIS (102 aa). The connecting peptide stretch occupies residues 290–296; the sequence is ESGDILR. The helical transmembrane segment at 297–317 threads the bilayer; that stretch reads VSTISGTTILIIALAGVGVLI. Residues 318–341 lie on the Cytoplasmic side of the membrane; that stretch reads WRRSQELKEVMYQPTQVNEGSSPS.

The protein belongs to the MHC class I family. As to quaternary structure, heterotrimer that consists of MR1, B2M and metabolite antigen. Major classes of metabolite ligands presented by MR1 include riboflavin-related antigens, pyrimidines and ribityl lumazines, nucleobase adducts and folate derivatives. Forms reversible covalent Schiff base complexes with microbial pyrimidine-based metabolite, which serves as a molecular switch triggering complete folding, stable association with B2M and translocation of the ternary complex from endoplasmic reticulum to the plasma membrane. Alternatively, forms non-Schiff base complexes with ribityl lumazines. On antigen-presenting cells, the ternary complex interacts with TCR on MR1-restricted CD4- or CD8-positive T cell subsets. Interacts with TAPBP and TAPBPL chaperones in the endoplasmic reticulum. TAPBP associated or not with MHC class I peptide loading complex binds ligand-free MR1 or MR1-B2M complex, providing for stable MR1 pools ready for metabolite antigen processing. TAPBPL interacts with MR1 in a ligand-independent way; this interaction may stabilize MR1 pool and facilitate ligand loading and dissociation. Structurally, MR1-B2M heterodimer adopts a topology similar to classical MHC class I molecules, with alpha-1 and alpha-2 domains of MR1 forming the antigen-binding cleft composed of two alpha-helices resting on a floor of 7-stranded anti-parallel beta-pleated sheet. N-glycosylated. In terms of tissue distribution, highly expressed thymus. Expressed in liver, kidney, spleen, heart, brain, lung, skeletal muscle and testis.

It localises to the cell membrane. The protein localises to the endoplasmic reticulum membrane. It is found in the golgi apparatus membrane. The protein resides in the early endosome membrane. Its subcellular location is the late endosome membrane. In terms of biological role, antigen-presenting molecule specialized in displaying microbial pyrimidine-based metabolites to alpha-beta T cell receptors (TCR) on innate-type mucosal-associated invariant T (MAIT) cells. In complex with B2M preferentially presents riboflavin-derived metabolites to semi-invariant TRAV1 TCRs on MAIT cells, guiding immune surveillance of the microbial metabolome at mucosal epithelial barriers. Signature pyrimidine-based microbial antigens are generated via non-enzymatic condensation of metabolite intermediates of the riboflavin pathway with by-products arising from other metabolic pathways such as glycolysis. Typical potent antigenic metabolites are 5-(2-oxoethylideneamino)-6-D-ribitylaminouracil (5-OE-RU) and 5-(2-oxopropylideneamino)-6-D-ribitylaminouracil (5-OP-RU), products of condensation of 5-amino-6-D-ribityaminouracil (5-A-RU) with glyoxal or methylglyoxal by-products, respectively. May present microbial antigens to various TRAV1-negative MAIT cell subsets, providing for unique recognition of diverse microbes, including pathogens that do not synthesize riboflavin. Upon antigen recognition, elicits rapid innate-type MAIT cell activation to eliminate pathogenic microbes by directly killing infected cells. During T cell development, drives thymic selection and post-thymic terminal differentiation of MAIT cells in a process dependent on commensal microflora. Acts as an immune sensor of cancer cell metabolome. May present a tumor-specific or -associated metabolite essential for cancer cell survival to a pan-cancer TCR on a non-MAIT CD8-positive T cell clone, triggering T cell-mediated killing of a wide range of cancer cell types. May present tumor-enriched pyridoxal and pyridoxal 5'-phosphate antigens, enabling preferential recognition of cancer cells. Presents nucleobase carbonyl adducts generated during oxidative stress. Captures M3Ade, a nucleobase adduct composed of one adenine modified by a malondialdehyde trimer, for recognition by MR1-restricted T cell clones expressing a polyclonal TCR repertoire. The sequence is that of Major histocompatibility complex class I-related protein 1 from Mus musculus (Mouse).